Consider the following 187-residue polypeptide: Orotate phosphoribosyltransferase (187 aa).

5-phospho-alpha-D-ribose 1-diphosphate-binding positions include R99, K100, K103, H105, and 125 to 133 (DDVITTGGS). Orotate-binding residues include T129 and R157.

The protein belongs to the purine/pyrimidine phosphoribosyltransferase family. PyrE subfamily. In terms of assembly, homodimer. Requires Mg(2+) as cofactor.

The catalysed reaction is orotidine 5'-phosphate + diphosphate = orotate + 5-phospho-alpha-D-ribose 1-diphosphate. The protein operates within pyrimidine metabolism; UMP biosynthesis via de novo pathway; UMP from orotate: step 1/2. Catalyzes the transfer of a ribosyl phosphate group from 5-phosphoribose 1-diphosphate to orotate, leading to the formation of orotidine monophosphate (OMP). This chain is Orotate phosphoribosyltransferase, found in Leptospira borgpetersenii serovar Hardjo-bovis (strain L550).